Here is a 449-residue protein sequence, read N- to C-terminus: Acetolactate synthase small subunit 1, chloroplastic (449 aa).

The N-terminal 30 residues, 1 to 30, are a transit peptide targeting the chloroplast; sequence MEHIQTRTTLSQLSTLPSDKRLGAIRFKCL. ACT domains are found at residues 31–98 and 259–333; these read LVMK…DLSK and TLSM…DITH.

Belongs to the acetolactate synthase small subunit family. In terms of assembly, the acetolactate synthase complex contains both large catalytic subunits and small regulatory subunits.

The protein resides in the plastid. It is found in the chloroplast. The protein operates within amino-acid biosynthesis; L-isoleucine biosynthesis; L-isoleucine from 2-oxobutanoate: step 1/4. Its pathway is amino-acid biosynthesis; L-valine biosynthesis; L-valine from pyruvate: step 1/4. Its function is as follows. Regulatory subunit of acetohydroxy-acid synthase. Probably involved in feedback inhibition by branched-chain amino acids. Not involved in herbicide tolerance. This chain is Acetolactate synthase small subunit 1, chloroplastic, found in Nicotiana plumbaginifolia (Leadwort-leaved tobacco).